We begin with the raw amino-acid sequence, 430 residues long: Serine hydroxymethyltransferase (430 aa).

Residue 120 to 122 (GHI) participates in (6S)-5,6,7,8-tetrahydrofolate binding. Position 226 is an N6-(pyridoxal phosphate)lysine (Lys-226).

The protein belongs to the SHMT family. As to quaternary structure, homodimer. It depends on pyridoxal 5'-phosphate as a cofactor.

The protein resides in the cytoplasm. The protein operates within amino-acid biosynthesis; glycine biosynthesis; glycine from L-serine: step 1/1. Functionally, catalyzes the reversible interconversion of serine and glycine with a modified folate serving as the one-carbon carrier. Also exhibits a pteridine-independent aldolase activity toward beta-hydroxyamino acids, producing glycine and aldehydes, via a retro-aldol mechanism. The chain is Serine hydroxymethyltransferase from Pyrobaculum calidifontis (strain DSM 21063 / JCM 11548 / VA1).